The primary structure comprises 196 residues: Small ribosomal subunit protein uS4c (196 aa).

Positions 22-42 (TRKTPKSGSNPKKKFHSGKKE) are disordered. The S4 RNA-binding domain maps to 89 to 169 (MRLDNILFRL…LPKHLTIDTL (81 aa)).

This sequence belongs to the universal ribosomal protein uS4 family. As to quaternary structure, part of the 30S ribosomal subunit. Contacts protein S5. The interaction surface between S4 and S5 is involved in control of translational fidelity.

It localises to the plastid. The protein localises to the chloroplast. In terms of biological role, one of the primary rRNA binding proteins, it binds directly to 16S rRNA where it nucleates assembly of the body of the 30S subunit. Functionally, with S5 and S12 plays an important role in translational accuracy. This chain is Small ribosomal subunit protein uS4c (rps4), found in Melica altissima (Siberian melic grass).